The sequence spans 148 residues: Sperm-specific protein PHI-2B (148 aa).

A compositionally biased stretch (basic residues) spans 1-35 (PSPSRRSRSRSRSRSKSPKRSPAKKARKTPKKRRA). Disordered stretches follow at residues 1–44 (PSPS…KPST) and 97–148 (GVLV…KSNN). One can recognise an H15 domain in the interval 40 to 119 (KKPSTLSMIV…GATGSFRVGK (80 aa)). The span at 124–148 (PKKKAKKAKSPKKKSSKKSSNKSNN) shows a compositional bias: basic residues.

The protein belongs to the histone H1/H5 family. In terms of tissue distribution, sperm.

The protein resides in the nucleus. It localises to the chromosome. Its function is as follows. Linker histones are implicated in chromatin remodeling and/or transcriptional regulation during spermiogenesis, the process of spermatid maturation into spermatozoa. This is Sperm-specific protein PHI-2B from Mytilus californianus (California mussel).